The chain runs to 364 residues: Apyrase (364 aa).

The signal sequence occupies residues 1-35 (MRSSYRVGNPIRFQPTNVVGLLLLSLVLSFMLVQS).

It belongs to the apyrase family. The cofactor is Ca(2+). In terms of tissue distribution, salivary gland (at protein level).

Its subcellular location is the secreted. It catalyses the reaction a ribonucleoside 5'-triphosphate + 2 H2O = a ribonucleoside 5'-phosphate + 2 phosphate + 2 H(+). Its function is as follows. Facilitates hematophagy by inhibiting ADP-dependent platelet aggregation in the host. Cleaves adenosine triphosphate (ATP) and adenosine diphosphate (ADP) to adenosine monophosphate (AMP) and inorganic phosphate in calcium-dependent manner. This Cimex lectularius (Bed bug) protein is Apyrase.